Consider the following 144-residue polypeptide: uncharacterized protein (144 aa).

A disordered region spans residues 1 to 24 (MGKVIQFPFGEEPEKKEEKELKTE). Positions 12 to 24 (EPEKKEEKELKTE) are enriched in basic and acidic residues.

This is an uncharacterized protein from Aquifex aeolicus (strain VF5).